The chain runs to 319 residues: Probable alcohol dehydrogenase (319 aa).

Positions 18, 39, 68, 71, 74, 82, and 149 each coordinate Zn(2+).

The protein belongs to the zinc-containing alcohol dehydrogenase family. The cofactor is Zn(2+).

It catalyses the reaction a primary alcohol + NAD(+) = an aldehyde + NADH + H(+). The catalysed reaction is a secondary alcohol + NAD(+) = a ketone + NADH + H(+). This is Probable alcohol dehydrogenase (terPD) from Pseudomonas sp.